We begin with the raw amino-acid sequence, 312 residues long: DNA primase small subunit PriS (312 aa).

Residues Asp88, Asp90, and Asp215 contribute to the active site.

Belongs to the eukaryotic-type primase small subunit family. In terms of assembly, heterodimer of a small subunit (PriS) and a large subunit (PriL). Mg(2+) is required as a cofactor. The cofactor is Mn(2+).

In terms of biological role, catalytic subunit of DNA primase, an RNA polymerase that catalyzes the synthesis of short RNA molecules used as primers for DNA polymerase during DNA replication. The small subunit contains the primase catalytic core and has DNA synthesis activity on its own. Binding to the large subunit stabilizes and modulates the activity, increasing the rate of DNA synthesis while decreasing the length of the DNA fragments, and conferring RNA synthesis capability. The DNA polymerase activity may enable DNA primase to also catalyze primer extension after primer synthesis. May also play a role in DNA repair. The sequence is that of DNA primase small subunit PriS from Pyrobaculum aerophilum (strain ATCC 51768 / DSM 7523 / JCM 9630 / CIP 104966 / NBRC 100827 / IM2).